Consider the following 366-residue polypeptide: Adenosine deaminase (366 aa).

The Zn(2+) site is built by H19 and H21. Residues H21, D23, and G181 each coordinate substrate. H208 provides a ligand contact to Zn(2+). E211 serves as the catalytic Proton donor. D304 lines the Zn(2+) pocket.

It belongs to the metallo-dependent hydrolases superfamily. Adenosine and AMP deaminases family. Adenosine deaminase subfamily. Zn(2+) is required as a cofactor.

The enzyme catalyses adenosine + H2O + H(+) = inosine + NH4(+). It catalyses the reaction 2'-deoxyadenosine + H2O + H(+) = 2'-deoxyinosine + NH4(+). In terms of biological role, catalyzes the hydrolytic deamination of adenosine and 2-deoxyadenosine. The polypeptide is Adenosine deaminase (Mycobacterium avium (strain 104)).